A 796-amino-acid chain; its full sequence is Putative aconitate hydratase, mitochondrial (796 aa).

A mitochondrion-targeting transit peptide spans 1-28 (MLRQIVSQRSAARRQLIDQLAPCLRRGL). Substrate-binding positions include Q108 and 201-203 (DSH). Positions 399, 462, and 465 each coordinate [4Fe-4S] cluster. Substrate is bound by residues R489 and R494. Residues 540-569 (EPPTGQDLPSKGFEAGNPAFQPSAPVPDSS) are disordered. 685-686 (AR) is a substrate binding site.

The protein belongs to the aconitase/IPM isomerase family.

It localises to the mitochondrion. Has no detectable activity towards cis-acontiate or cis-homoaconitate. The sequence is that of Putative aconitate hydratase, mitochondrial (acoB) from Emericella nidulans (strain FGSC A4 / ATCC 38163 / CBS 112.46 / NRRL 194 / M139) (Aspergillus nidulans).